Reading from the N-terminus, the 183-residue chain is Endoribonuclease YbeY (183 aa).

Zn(2+) contacts are provided by histidine 143, histidine 147, and histidine 153.

This sequence belongs to the endoribonuclease YbeY family. Requires Zn(2+) as cofactor.

It localises to the cytoplasm. Single strand-specific metallo-endoribonuclease involved in late-stage 70S ribosome quality control and in maturation of the 3' terminus of the 16S rRNA. This chain is Endoribonuclease YbeY, found in Rickettsia bellii (strain OSU 85-389).